A 162-amino-acid chain; its full sequence is Large ribosomal subunit protein bL17 (162 aa).

A compositionally biased stretch (basic and acidic residues) spans 125-140 (AAKEAPAKEVAEEKAA). The disordered stretch occupies residues 125 to 162 (AAKEAPAKEVAEEKAAKPAKKAAPKKAEKEEAEDAAEA).

It belongs to the bacterial ribosomal protein bL17 family. As to quaternary structure, part of the 50S ribosomal subunit. Contacts protein L32.

The protein is Large ribosomal subunit protein bL17 of Oleidesulfovibrio alaskensis (strain ATCC BAA-1058 / DSM 17464 / G20) (Desulfovibrio alaskensis).